We begin with the raw amino-acid sequence, 555 residues long: Formate--tetrahydrofolate ligase (555 aa).

65–72 serves as a coordination point for ATP; sequence TPAGEGKS.

The protein belongs to the formate--tetrahydrofolate ligase family.

It catalyses the reaction (6S)-5,6,7,8-tetrahydrofolate + formate + ATP = (6R)-10-formyltetrahydrofolate + ADP + phosphate. The protein operates within one-carbon metabolism; tetrahydrofolate interconversion. The protein is Formate--tetrahydrofolate ligase of Staphylococcus aureus (strain bovine RF122 / ET3-1).